Consider the following 151-residue polypeptide: Small ribosomal subunit protein uS15y (151 aa).

It belongs to the universal ribosomal protein uS15 family.

This chain is Small ribosomal subunit protein uS15y (RPS13B), found in Arabidopsis thaliana (Mouse-ear cress).